Here is a 284-residue protein sequence, read N- to C-terminus: Probable O-methyltransferase ustE (284 aa).

N-linked (GlcNAc...) asparagine glycosylation is found at asparagine 22 and asparagine 29. 2 helical membrane passes run 88–108 and 157–177; these read LLLL…VLTV and YLAT…VCEI. Residue asparagine 205 is glycosylated (N-linked (GlcNAc...) asparagine). A helical transmembrane segment spans residues 215–235; that stretch reads GLALASGGMIYGMSIAMFFMW. Asparagine 264 carries N-linked (GlcNAc...) asparagine glycosylation.

This sequence belongs to the class VI-like SAM-binding methyltransferase superfamily. Isoprenylcysteine carboxyl methyltransferase family.

It is found in the membrane. It participates in secondary metabolite biosynthesis. Probable O-methyltransferase; part of the gene cluster that mediates the biosynthesis of ustilaginoidins, dimeric gamma-naphthopyrones isolated from different fungal species. The first step in the biosynthesis of ustilaginoidins is the production of gamma-naphthopyrone precursor YWA1 by the non-reducing polyketide synthase ustP, via condensation of one acetyl-CoA starter unit with 6 malonyl-CoA units. YWA1 is then probably substrate of the ustZ to yield norrubrofusarin via a dehydration reaction. A key enzyme in the biosynthetic pathway is the laccase ustL, which catalyzes the oxidative dimerization of norrubrofusarin to ustilaginoidin A. It can produce the M- and P-atropisomers in varying amounts, depending on the reaction conditions. For the biosynthesis of 3-methylustilaginoid in derivatives such as chaetochromin A, a methylated derivative of YWA1 is required. The C-methylation is considered to be catalyzed by ustM, the phosphopantetheine attachment site of which indicates that it acts on the growing polyketide chain before release of the product. For the biosynthesis of chaetochromin A, it is assumed that saturation of the D2 double bond takes place before dimerization, and is probably catalyzed by an external reductase because no candidate gene was identified within the cluster. The polypeptide is Probable O-methyltransferase ustE (Ustilaginoidea virens (Rice false smut fungus)).